The following is a 60-amino-acid chain: Large ribosomal subunit protein bL32 (60 aa).

Belongs to the bacterial ribosomal protein bL32 family.

In Borrelia hermsii (strain HS1 / DAH), this protein is Large ribosomal subunit protein bL32.